The primary structure comprises 264 residues: Orotidine 5'-phosphate decarboxylase (264 aa).

Substrate contacts are provided by residues Asp-37, 59–61 (KTH), 91–100 (DRKFADIGNT), Tyr-217, and Arg-235. Lys-93 acts as the Proton donor in catalysis.

This sequence belongs to the OMP decarboxylase family.

It carries out the reaction orotidine 5'-phosphate + H(+) = UMP + CO2. The protein operates within pyrimidine metabolism; UMP biosynthesis via de novo pathway; UMP from orotate: step 2/2. This chain is Orotidine 5'-phosphate decarboxylase (URA3), found in Torulaspora delbrueckii (Yeast).